The chain runs to 72 residues: MNNSMISPSVVDLKAKTGDRYSLVVITSKRARQIIAGEEPLVDIESNKALTIAINEVDQDKIKFDLPIEGIN.

This sequence belongs to the RNA polymerase subunit omega family. As to quaternary structure, the RNAP catalytic core consists of 2 alpha, 1 beta, 1 beta' and 1 omega subunit. When a sigma factor is associated with the core the holoenzyme is formed, which can initiate transcription.

It carries out the reaction RNA(n) + a ribonucleoside 5'-triphosphate = RNA(n+1) + diphosphate. Its function is as follows. Promotes RNA polymerase assembly. Latches the N- and C-terminal regions of the beta' subunit thereby facilitating its interaction with the beta and alpha subunits. This Clostridium acetobutylicum (strain ATCC 824 / DSM 792 / JCM 1419 / IAM 19013 / LMG 5710 / NBRC 13948 / NRRL B-527 / VKM B-1787 / 2291 / W) protein is DNA-directed RNA polymerase subunit omega.